We begin with the raw amino-acid sequence, 123 residues long: Protein Rev (123 aa).

Phosphoserine; by host CK2 is present on S5. A homomultimerization region spans residues 18-26 (IIKTLYQSN). Disordered stretches follow at residues 24-50 (QSNPYPSPAGTRQARKNRRRRWRARQR) and 79-123 (EGLS…GTKE). The short motif at 34–50 (TRQARKNRRRRWRARQR) is the Nuclear localization signal and RNA-binding (RRE) element. Residues 36 to 50 (QARKNRRRRWRARQR) are compositionally biased toward basic residues. A Nuclear export signal and binding to XPO1 motif is present at residues 73–84 (FQLPPLEGLSLD). S92 carries the post-translational modification Phosphoserine; by host. Positions 93-105 (GTQQPQGTETGVG) are enriched in low complexity.

Belongs to the HIV-1 REV protein family. Homomultimer; when bound to the RRE. Multimeric assembly is essential for activity and may involve XPO1. Binds to human KPNB1, XPO1, TNPO1, RANBP5 and IPO7. Interacts with the viral Integrase. Interacts with human KHDRBS1. Interacts with human NAP1; this interaction decreases Rev multimerization and stimulates its activity. Interacts with human DEAD-box helicases DDX3 and DDX24; these interactions may serve for viral RNA export to the cytoplasm and packaging, respectively. Interacts with human PSIP1; this interaction may inhibit HIV-1 DNA integration by promoting dissociation of the Integrase-LEDGF/p75 complex. In terms of processing, asymmetrically arginine dimethylated at one site by host PRMT6. Methylation impairs the RNA-binding activity and export of viral RNA from the nucleus to the cytoplasm. Phosphorylated by protein kinase CK2. Presence of, and maybe binding to the N-terminus of the regulatory beta subunit of CK2 is necessary for CK2-mediated Rev's phosphorylation.

The protein localises to the host nucleus. The protein resides in the host nucleolus. It is found in the host cytoplasm. Functionally, escorts unspliced or incompletely spliced viral pre-mRNAs (late transcripts) out of the nucleus of infected cells. These pre-mRNAs carry a recognition sequence called Rev responsive element (RRE) located in the env gene, that is not present in fully spliced viral mRNAs (early transcripts). This function is essential since most viral proteins are translated from unspliced or partially spliced pre-mRNAs which cannot exit the nucleus by the pathway used by fully processed cellular mRNAs. Rev itself is translated from a fully spliced mRNA that readily exits the nucleus. Rev's nuclear localization signal (NLS) binds directly to KPNB1/Importin beta-1 without previous binding to KPNA1/Importin alpha-1. KPNB1 binds to the GDP bound form of RAN (Ran-GDP) and targets Rev to the nucleus. In the nucleus, the conversion from Ran-GDP to Ran-GTP dissociates Rev from KPNB1 and allows Rev's binding to the RRE in viral pre-mRNAs. Rev multimerization on the RRE via cooperative assembly exposes its nuclear export signal (NES) to the surface. Rev can then form a complex with XPO1/CRM1 and Ran-GTP, leading to nuclear export of the complex. Conversion from Ran-GTP to Ran-GDP mediates dissociation of the Rev/RRE/XPO1/RAN complex, so that Rev can return to the nucleus for a subsequent round of export. Beside KPNB1, also seems to interact with TNPO1/Transportin-1, RANBP5/IPO5 and IPO7/RANBP7 for nuclear import. The nucleoporin-like HRB/RIP is an essential cofactor that probably indirectly interacts with Rev to release HIV RNAs from the perinuclear region to the cytoplasm. This Human immunodeficiency virus type 1 group M subtype G (isolate 92NG083) (HIV-1) protein is Protein Rev.